The primary structure comprises 540 residues: MAKEIKFSEDARSKMLKGVDKLANTVKSTIGPKGRNVVLEQSYGSPTITNDGVTIAKATDLEDHFENMGAKLVSEVASKTNDIAGDGTTTATVLTQAIVNEGMKNVTAGANPVGIRRGIELATKAAVDALHEMSHTVESKSDIAQVASISSANEEVGKLIADAMEKVGNDGVITIEESKGIDTSLDVVEGMQFDRGYLSQYMVTDNDKMEADLDNPYILLTDKKISNIQEVLPLLQSIVQQGRPLLIIADDVDGEALPTLVLNKIRGTFNVVAVKAPGFGDRRKAMLQDIATLTGATVITDDLGLQLKDTTVEQLGSAGKVTVTKENTTIVEGAGDKDKIAERVEQIKKQISETTSDFDREKLQERLAKLSGGVAVIKVGAATETELKERKYRIEDALNATRAAVEEGFVPGGGTALVNVIGKVAALEEEGDVQTGINIVKRALEEPVRQIAENAGLEGSVIVEKLKEQKPGVGFNAATNEWVDMVEAGIVDPTKVTRSALQNAASVSALLLTTEAVVADKPEPESNNQMPATPGMGGMM.

Residues 29–32, 86–90, G413, 476–478, and D492 each bind ATP; these read TIGP, DGTTT, and NAA. Residues 520-540 form a disordered region; the sequence is DKPEPESNNQMPATPGMGGMM.

The protein belongs to the chaperonin (HSP60) family. As to quaternary structure, forms a cylinder of 14 subunits composed of two heptameric rings stacked back-to-back. Interacts with the co-chaperonin GroES.

It is found in the cytoplasm. It catalyses the reaction ATP + H2O + a folded polypeptide = ADP + phosphate + an unfolded polypeptide.. Together with its co-chaperonin GroES, plays an essential role in assisting protein folding. The GroEL-GroES system forms a nano-cage that allows encapsulation of the non-native substrate proteins and provides a physical environment optimized to promote and accelerate protein folding. This Ligilactobacillus salivarius (strain UCC118) (Lactobacillus salivarius) protein is Chaperonin GroEL.